The primary structure comprises 555 residues: Glycerol dehydratase large subunit (555 aa).

The protein belongs to the diol/glycerol dehydratase large subunit family. In terms of assembly, probably consists of three subunits: large, medium, and small. Requires adenosylcob(III)alamin as cofactor.

The catalysed reaction is glycerol = 3-hydroxypropanal + H2O. The protein is Glycerol dehydratase large subunit (dhaB) of Citrobacter freundii.